Reading from the N-terminus, the 277-residue chain is Large ribosomal subunit protein uL2 (277 aa).

The segment at 218 to 277 (PTVRGSVMNPNDHPHGGGEGKSPIGHPSPLTPWGKPALGYKTRKNKKYSDGMIIKRRGQK) is disordered.

It belongs to the universal ribosomal protein uL2 family. As to quaternary structure, part of the 50S ribosomal subunit. Forms a bridge to the 30S subunit in the 70S ribosome.

Functionally, one of the primary rRNA binding proteins. Required for association of the 30S and 50S subunits to form the 70S ribosome, for tRNA binding and peptide bond formation. It has been suggested to have peptidyltransferase activity; this is somewhat controversial. Makes several contacts with the 16S rRNA in the 70S ribosome. This is Large ribosomal subunit protein uL2 from Clostridium novyi (strain NT).